The following is a 424-amino-acid chain: MEKFRVHGPFTLSGTVDISGAKNAALPILFAAVLATEPVTLTNVPDLKDVDTTFKILRKLGVVVERDESGAVQIDASKIDHYVAPYELVKTMRASIWALAPLVARFHEGQVSLPGGCTIGARPVDMHISSLEKMGALIELDEGYVKATSNGRLHGARIYMDKVSVGATLSVMMAATLAEGTTTIENAAREPEIVDTALFLNAMGAKISGAGTDTITIEGVERLTGCQHRIVADRIETGTFLVAAAVSGGKITCRGTKADTLEAVIEKLREAGMEVTVTEDTITLDSKGQRPKAVNIRTMPHPGFPTDMQAQFTLLNVVAEGTSRITETIFENRFMHIPELNRMGAKGEIEGNTAICHGVEKLKSAEVMATDLRASISLVLAGCIASGETIVDRIYHIDRGYEHIEDKLRGIGAKIERFSTKFEE.

Residue 22-23 (KN) participates in phosphoenolpyruvate binding. Residue Arg-93 coordinates UDP-N-acetyl-alpha-D-glucosamine. Cys-117 serves as the catalytic Proton donor. 2-(S-cysteinyl)pyruvic acid O-phosphothioketal is present on Cys-117. UDP-N-acetyl-alpha-D-glucosamine contacts are provided by residues 162-165 (KVSV), Asp-307, and Ile-329.

Belongs to the EPSP synthase family. MurA subfamily.

Its subcellular location is the cytoplasm. It carries out the reaction phosphoenolpyruvate + UDP-N-acetyl-alpha-D-glucosamine = UDP-N-acetyl-3-O-(1-carboxyvinyl)-alpha-D-glucosamine + phosphate. It participates in cell wall biogenesis; peptidoglycan biosynthesis. In terms of biological role, cell wall formation. Adds enolpyruvyl to UDP-N-acetylglucosamine. This Actinobacillus pleuropneumoniae serotype 7 (strain AP76) protein is UDP-N-acetylglucosamine 1-carboxyvinyltransferase.